We begin with the raw amino-acid sequence, 64 residues long: Large ribosomal subunit protein bL32 (64 aa).

The interval methionine 1–serine 28 is disordered.

The protein belongs to the bacterial ribosomal protein bL32 family.

In Xylella fastidiosa (strain 9a5c), this protein is Large ribosomal subunit protein bL32 (rpmF).